The chain runs to 417 residues: Serine hydroxymethyltransferase (417 aa).

Residues L112 and 116–118 each bind (6S)-5,6,7,8-tetrahydrofolate; that span reads GHL. K221 bears the N6-(pyridoxal phosphate)lysine mark. (6S)-5,6,7,8-tetrahydrofolate is bound at residue E247.

The protein belongs to the SHMT family. In terms of assembly, homodimer. Pyridoxal 5'-phosphate is required as a cofactor.

It is found in the cytoplasm. The catalysed reaction is (6R)-5,10-methylene-5,6,7,8-tetrahydrofolate + glycine + H2O = (6S)-5,6,7,8-tetrahydrofolate + L-serine. It functions in the pathway one-carbon metabolism; tetrahydrofolate interconversion. Its pathway is amino-acid biosynthesis; glycine biosynthesis; glycine from L-serine: step 1/1. Its function is as follows. Catalyzes the reversible interconversion of serine and glycine with tetrahydrofolate (THF) serving as the one-carbon carrier. This reaction serves as the major source of one-carbon groups required for the biosynthesis of purines, thymidylate, methionine, and other important biomolecules. Also exhibits THF-independent aldolase activity toward beta-hydroxyamino acids, producing glycine and aldehydes, via a retro-aldol mechanism. The polypeptide is Serine hydroxymethyltransferase (Borrelia garinii subsp. bavariensis (strain ATCC BAA-2496 / DSM 23469 / PBi) (Borreliella bavariensis)).